A 388-amino-acid polypeptide reads, in one-letter code: Formate-dependent phosphoribosylglycinamide formyltransferase (388 aa).

N(1)-(5-phospho-beta-D-ribosyl)glycinamide contacts are provided by residues 11 to 12 (EL) and Glu-71. Residues Arg-103, Lys-144, 149 to 154 (SSGKGQ), 184 to 187 (EEFI), and Glu-192 contribute to the ATP site. The 193-residue stretch at 108–300 (DLAAKELGLK…EFELHLRAVL (193 aa)) folds into the ATP-grasp domain. Mg(2+) contacts are provided by Glu-257 and Glu-270. N(1)-(5-phospho-beta-D-ribosyl)glycinamide contacts are provided by residues Asp-277, Lys-349, and 356–357 (RR).

It belongs to the PurK/PurT family. As to quaternary structure, homodimer.

It catalyses the reaction N(1)-(5-phospho-beta-D-ribosyl)glycinamide + formate + ATP = N(2)-formyl-N(1)-(5-phospho-beta-D-ribosyl)glycinamide + ADP + phosphate + H(+). It functions in the pathway purine metabolism; IMP biosynthesis via de novo pathway; N(2)-formyl-N(1)-(5-phospho-D-ribosyl)glycinamide from N(1)-(5-phospho-D-ribosyl)glycinamide (formate route): step 1/1. In terms of biological role, involved in the de novo purine biosynthesis. Catalyzes the transfer of formate to 5-phospho-ribosyl-glycinamide (GAR), producing 5-phospho-ribosyl-N-formylglycinamide (FGAR). Formate is provided by PurU via hydrolysis of 10-formyl-tetrahydrofolate. This is Formate-dependent phosphoribosylglycinamide formyltransferase from Bacteroides thetaiotaomicron (strain ATCC 29148 / DSM 2079 / JCM 5827 / CCUG 10774 / NCTC 10582 / VPI-5482 / E50).